Here is a 305-residue protein sequence, read N- to C-terminus: Phosphatidate cytidylyltransferase (305 aa).

The next 7 membrane-spanning stretches (helical) occupy residues 24-44 (LLVF…AFIV), 97-117 (PEHV…HLVF), 124-144 (LGPI…SVPI), 151-171 (LYGF…IFLI), 202-222 (TVVG…IFYS), 232-252 (IAMP…GFFG), and 277-297 (MLDV…ILLI).

This sequence belongs to the CDS family.

It is found in the cell membrane. The enzyme catalyses a 1,2-diacyl-sn-glycero-3-phosphate + CTP + H(+) = a CDP-1,2-diacyl-sn-glycerol + diphosphate. It functions in the pathway phospholipid metabolism; CDP-diacylglycerol biosynthesis; CDP-diacylglycerol from sn-glycerol 3-phosphate: step 3/3. This chain is Phosphatidate cytidylyltransferase (cdsA), found in Chlamydia muridarum (strain MoPn / Nigg).